A 101-amino-acid polypeptide reads, in one-letter code: Small ribosomal subunit protein uS14A (101 aa).

Belongs to the universal ribosomal protein uS14 family. Part of the 30S ribosomal subunit. Contacts proteins S3 and S10.

In terms of biological role, binds 16S rRNA, required for the assembly of 30S particles and may also be responsible for determining the conformation of the 16S rRNA at the A site. This chain is Small ribosomal subunit protein uS14A, found in Salinispora arenicola (strain CNS-205).